The following is a 407-amino-acid chain: Argininosuccinate synthase (407 aa).

Residues 16–24 and Ala44 contribute to the ATP site; that span reads AYSGGLDTS. Residues Tyr96 and Ser101 each coordinate L-citrulline. ATP is bound at residue Gly126. Residues Thr128, Asn132, and Asp133 each contribute to the L-aspartate site. Position 132 (Asn132) interacts with L-citrulline. Positions 136, 185, 194, 270, and 282 each coordinate L-citrulline.

It belongs to the argininosuccinate synthase family. Type 1 subfamily. As to quaternary structure, homotetramer.

The protein localises to the cytoplasm. It carries out the reaction L-citrulline + L-aspartate + ATP = 2-(N(omega)-L-arginino)succinate + AMP + diphosphate + H(+). The protein operates within amino-acid biosynthesis; L-arginine biosynthesis; L-arginine from L-ornithine and carbamoyl phosphate: step 2/3. This chain is Argininosuccinate synthase, found in Shewanella sediminis (strain HAW-EB3).